The chain runs to 598 residues: Elongation factor 4 (598 aa).

The 183-residue stretch at 2-184 folds into the tr-type G domain; it reads KNIRNFSIIA…RLVKEIPAPE (183 aa). GTP contacts are provided by residues 14–19 and 131–134; these read DHGKST and NKID.

This sequence belongs to the TRAFAC class translation factor GTPase superfamily. Classic translation factor GTPase family. LepA subfamily.

Its subcellular location is the cell inner membrane. It carries out the reaction GTP + H2O = GDP + phosphate + H(+). Its function is as follows. Required for accurate and efficient protein synthesis under certain stress conditions. May act as a fidelity factor of the translation reaction, by catalyzing a one-codon backward translocation of tRNAs on improperly translocated ribosomes. Back-translocation proceeds from a post-translocation (POST) complex to a pre-translocation (PRE) complex, thus giving elongation factor G a second chance to translocate the tRNAs correctly. Binds to ribosomes in a GTP-dependent manner. The sequence is that of Elongation factor 4 from Proteus mirabilis (strain HI4320).